The primary structure comprises 282 residues: Casein kinase II subunit beta-2 (282 aa).

Residues 1-92 (MYRERGMVGS…ESEVSGSDGE (92 aa)) form a disordered region. The segment covering 13 to 28 (EVVDRKRINEIHDNRP) has biased composition (basic and acidic residues). Composition is skewed to polar residues over residues 29-47 (SHSMSQPVNGKGKVTSTSV) and 61-71 (RSGSISKTNIS). Over residues 75-92 (DISDTDSEESEVSGSDGE) the composition is skewed to acidic residues.

Belongs to the casein kinase 2 subunit beta family. As to quaternary structure, heterotetramer of two catalytic alpha subunits and two regulatory beta subunits. Interacts with CCA1. Phosphorylated by alpha subunit.

Its subcellular location is the cytoplasm. It is found in the cytosol. The protein resides in the nucleus. Functionally, plays a complex role in regulating the basal catalytic activity of the alpha subunit. The tetrameric holoenzyme CK2, composed of two alpha and two beta subunits, phosphorylates the transcription factor PIF1 after an exposure to light, resulting in a proteasome-dependent degradation of PIF1 and promotion of photomorphogenesis. CK2 phosphorylates translation initiation factors. May participate in the regulation of the initiation of translation. The protein is Casein kinase II subunit beta-2 (CKB2) of Arabidopsis thaliana (Mouse-ear cress).